We begin with the raw amino-acid sequence, 468 residues long: Abscisic acid 8'-hydroxylase 4 (468 aa).

The chain crosses the membrane as a helical span at residues 4–24; sequence IWFLVVPILILCLLLVRVIVS. Heme is bound at residue Cys415.

Belongs to the cytochrome P450 family. Heme serves as cofactor. Mainly expressed in flowers. Lower expression in siliques, rosette leaves, roots and stems. Not expressed in dry seeds. Expressed in silique envelopes, but not in embryo or endosperm during the seed development.

Its subcellular location is the membrane. The catalysed reaction is 2-cis-(+)-abscisate + reduced [NADPH--hemoprotein reductase] + O2 = (+)-8'-hydroxyabscisate + oxidized [NADPH--hemoprotein reductase] + H2O + H(+). It participates in plant hormone degradation; abscisic acid degradation. Functionally, involved in the oxidative degradation of abscisic acid, but not in the isomerization of the produced 8'-hydroxyabscisic acid (8'-OH-ABA) to (-)-phaseic acid (PA). This is Abscisic acid 8'-hydroxylase 4 (CYP707A4) from Arabidopsis thaliana (Mouse-ear cress).